The primary structure comprises 470 residues: Uronate isomerase (470 aa).

The protein belongs to the metallo-dependent hydrolases superfamily. Uronate isomerase family.

It catalyses the reaction D-glucuronate = D-fructuronate. It carries out the reaction aldehydo-D-galacturonate = keto-D-tagaturonate. Its pathway is carbohydrate metabolism; pentose and glucuronate interconversion. The sequence is that of Uronate isomerase from Salmonella newport (strain SL254).